We begin with the raw amino-acid sequence, 163 residues long: S-fimbrial adhesin protein SfaS (163 aa).

The N-terminal stretch at 1–22 (MKLKAIILATGLINCIAFSAQA) is a signal peptide. An intrachain disulfide couples C38 to C75. The interval 138–144 (KARAVSK) is involved in sialic acid binding.

Belongs to the fimbrial protein family.

It localises to the fimbrium. In terms of biological role, fimbriae (also called pili), polar filaments radiating from the surface of the bacterium to a length of 0.5-1.5 micrometers and numbering 100-300 per cell, enable bacteria to colonize the epithelium of specific host organs. Its function is as follows. A minor fimbrial subunit, this protein is necessary for full expression of S-specific binding. S-fimbrial adhesins enable pathogenic E.coli causing urinary-tract infections or newborn meningitis to attach to glycoproteins terminating with alpha-sialic acid-(2-3)-beta-Gal. This protein binds to the alpha-sialic acid-(2-3)-beta-Gal and is thus responsible for erythrocyte recognition and hemagglutination. This chain is S-fimbrial adhesin protein SfaS (sfaS), found in Escherichia coli O6:K15:H31 (strain 536 / UPEC).